Consider the following 643-residue polypeptide: Lysophospholipase ARB_05919 (643 aa).

The signal sequence occupies residues 1 to 22; that stretch reads MMFIPATLGTFVLASLLPATVG. A PLA2c domain is found at 50 to 597; the sequence is DCPSTKPAVR…KMYCWDGTLN (548 aa). Residues Asn142, Asn176, Asn195, Asn293, Asn466, Asn472, Asn482, Asn503, Asn524, Asn533, Asn552, and Asn597 are each glycosylated (N-linked (GlcNAc...) asparagine).

This sequence belongs to the lysophospholipase family.

The protein localises to the secreted. The enzyme catalyses a 1-acyl-sn-glycero-3-phosphocholine + H2O = sn-glycerol 3-phosphocholine + a fatty acid + H(+). Its function is as follows. Catalyzes the release of fatty acids from lysophospholipids. Phospholipase B may well contribute to pathogenicity by abetting the fungus in damaging host cell membranes. The polypeptide is Lysophospholipase ARB_05919 (Arthroderma benhamiae (strain ATCC MYA-4681 / CBS 112371) (Trichophyton mentagrophytes)).